Reading from the N-terminus, the 120-residue chain is NAD(P)H-quinone oxidoreductase subunit 3, chloroplastic (120 aa).

A run of 3 helical transmembrane segments spans residues 7-27, 64-84, and 89-109; these read YQTF…ALLI, SFAL…PWAM, and LGIF…IGLV.

The protein belongs to the complex I subunit 3 family. NDH is composed of at least 16 different subunits, 5 of which are encoded in the nucleus.

It localises to the plastid. Its subcellular location is the chloroplast thylakoid membrane. The catalysed reaction is a plastoquinone + NADH + (n+1) H(+)(in) = a plastoquinol + NAD(+) + n H(+)(out). It carries out the reaction a plastoquinone + NADPH + (n+1) H(+)(in) = a plastoquinol + NADP(+) + n H(+)(out). Functionally, NDH shuttles electrons from NAD(P)H:plastoquinone, via FMN and iron-sulfur (Fe-S) centers, to quinones in the photosynthetic chain and possibly in a chloroplast respiratory chain. The immediate electron acceptor for the enzyme in this species is believed to be plastoquinone. Couples the redox reaction to proton translocation, and thus conserves the redox energy in a proton gradient. This chain is NAD(P)H-quinone oxidoreductase subunit 3, chloroplastic, found in Psilotum nudum (Whisk fern).